The sequence spans 216 residues: Vesicle-associated membrane protein 7A (216 aa).

Topologically, residues 1 to 189 are cytoplasmic; sequence MSQTDILYAC…KRKLWWQNKK (189 aa). Positions 6–112 constitute a Longin domain; it reads ILYACVSYKG…ATYDPFIRVL (107 aa). The v-SNARE coiled-coil homology domain maps to 126 to 186; sequence KMNLVMDQVS…VALKRKLWWQ (61 aa). A helical; Anchor for type IV membrane protein membrane pass occupies residues 190–210; it reads LAIAIGLVVCILIAVITLALL. Topologically, residues 211 to 216 are vesicular; that stretch reads KYFKVI.

The protein belongs to the synaptobrevin family. As to quaternary structure, component of the SNARE complex composed of syn7A, syn8A, vamp7A and vti1A.

It localises to the cytoplasmic vesicle. It is found in the secretory vesicle membrane. Its subcellular location is the golgi apparatus. The protein resides in the trans-Golgi network membrane. The protein localises to the late endosome membrane. It localises to the lysosome membrane. It is found in the endoplasmic reticulum membrane. Its subcellular location is the phagosome membrane. Involved in the targeting and/or fusion of transport vesicles to their target membrane during transport of proteins from the early endosome to the lysosome. Required for heterotypic fusion of late endosomes with lysosomes and homotypic lysosomal fusion. Required for calcium regulated lysosomal exocytosis. This chain is Vesicle-associated membrane protein 7A, found in Dictyostelium discoideum (Social amoeba).